The sequence spans 142 residues: Nucleoside diphosphate kinase (142 aa).

ATP is bound by residues Lys11, Phe59, Arg87, Thr93, Arg104, and Asn114. Residue His117 is the Pros-phosphohistidine intermediate of the active site.

The protein belongs to the NDK family. In terms of assembly, homotetramer. Mg(2+) is required as a cofactor.

It localises to the cytoplasm. It catalyses the reaction a 2'-deoxyribonucleoside 5'-diphosphate + ATP = a 2'-deoxyribonucleoside 5'-triphosphate + ADP. The enzyme catalyses a ribonucleoside 5'-diphosphate + ATP = a ribonucleoside 5'-triphosphate + ADP. Functionally, major role in the synthesis of nucleoside triphosphates other than ATP. The ATP gamma phosphate is transferred to the NDP beta phosphate via a ping-pong mechanism, using a phosphorylated active-site intermediate. This chain is Nucleoside diphosphate kinase, found in Marinobacter nauticus (strain ATCC 700491 / DSM 11845 / VT8) (Marinobacter aquaeolei).